A 244-amino-acid chain; its full sequence is LexA repressor (244 aa).

Residues 1–24 form a disordered region; that stretch reads MSDSSDTTVDGASDGASDGASGAD. Low complexity predominate over residues 10–24; the sequence is DGASDGASDGASGAD. The segment at residues 58–78 is a DNA-binding region (H-T-H motif); the sequence is IREIGDAVGLTSTSSVAHQLR. Residues Ser-168 and Lys-205 each act as for autocatalytic cleavage activity in the active site.

This sequence belongs to the peptidase S24 family. As to quaternary structure, homodimer.

The enzyme catalyses Hydrolysis of Ala-|-Gly bond in repressor LexA.. In terms of biological role, represses a number of genes involved in the response to DNA damage (SOS response), including recA and lexA. In the presence of single-stranded DNA, RecA interacts with LexA causing an autocatalytic cleavage which disrupts the DNA-binding part of LexA, leading to derepression of the SOS regulon and eventually DNA repair. This is LexA repressor from Mycobacterium marinum (strain ATCC BAA-535 / M).